A 948-amino-acid chain; its full sequence is MDKTYQPHAIETSWYQTWESENYFAPQGAGDSYTIMIPPPNVTGSLHMGHGFNNAIMDALIRFRRMQGRNTLWQPGTDHAGIATQMLVERRLEAQGVSRHELGREKFLDKIWEWKAESGGNISRQIRRLGSSVDWSRERFTMDDGLSDAVKEAFVRLHEDGLIYRGKRLVNWDTKLHTAISDLEVENHDEKGHLWNLRYPLADGAKTAEGLDYLIVATTRPETMLGDAAVAVNPQDERYKALIGKFVELPLVGRRIPIIADDYCDPEFGTGCVKITPAHDFNDYEVGKRHNLPLLNIFDKNANVLPAAQVFNLDGKLNESVDGTLPAAYAGLDRFEARKQIVAAFDAAGLLVSIDDHALKVPKGDRSGTIIEPWLTDQWYVSTKPLAEPAIAAVEDGRIAFVPKQYENMYFSWMRDIQDWCISRQLWWGHRIPAWYDESGKVYVGRDEAEVRAKNNLGPEIALQQDNDVLDTWFSSGLWTFSTLGWPEKTKALETFHSTDVLVTGFDIIFFWVARMIMLTLHLVKNEDGTPQVPFKTVYVHGLVRDGQGQKMSKSKGNVLDPLDIVDGIDLETLVEKRTSGLMQPQLAKKIEKQTRQEFADGIASYGTDALRFTFCSLASTGRDIKFDMGRVEGYRNFCNKIWNAARYVLDKGEDCGQNGEAVELSLADRWIISQLQRTEAEVTRQLDQFRFDLAAQALYEFIWNQYCDWYLELSKPVLWDETASIERQRGTRRTLVRVLEVALRLAHPFMPFITEEIWQRLAPLAGVEGKTIMLQPWPVANEARIDQAAEDDIEWLKGLMLAVRNIRGEMNIGPGKPLQLFLKNVSADDQRRLSENDYLLRKLAKLESMTVLTDGAEAPLSATALVGDMEVLVPMAGLIDKGAELARLDKEIQRLQGEVQRVGGKLSNAAFVDKAPPDVIAKERAKLTEAEQALGKLAEQHARIASL.

Residues 40 to 50 (PNVTGSLHMGH) carry the 'HIGH' region motif. The short motif at 551 to 555 (KMSKS) is the 'KMSKS' region element. Residue Lys554 participates in ATP binding. Positions 879 to 945 (LIDKGAELAR…GKLAEQHARI (67 aa)) form a coiled coil.

It belongs to the class-I aminoacyl-tRNA synthetase family. ValS type 1 subfamily. As to quaternary structure, monomer.

The protein localises to the cytoplasm. The catalysed reaction is tRNA(Val) + L-valine + ATP = L-valyl-tRNA(Val) + AMP + diphosphate. Catalyzes the attachment of valine to tRNA(Val). As ValRS can inadvertently accommodate and process structurally similar amino acids such as threonine, to avoid such errors, it has a 'posttransfer' editing activity that hydrolyzes mischarged Thr-tRNA(Val) in a tRNA-dependent manner. This is Valine--tRNA ligase from Pseudomonas syringae pv. tomato (strain ATCC BAA-871 / DC3000).